Reading from the N-terminus, the 750-residue chain is Putative tyrosine-protein kinase EpsB (750 aa).

Residues Met-1–Arg-31 are Cytoplasmic-facing. Residues Trp-32 to Ala-52 traverse the membrane as a helical segment. At Arg-53–Lys-444 the chain is on the periplasmic side. The helical transmembrane segment at Leu-445–Val-465 threads the bilayer. The Cytoplasmic portion of the chain corresponds to Arg-466–Ala-750.

This sequence belongs to the etk/wzc family.

The protein resides in the cell inner membrane. It carries out the reaction L-tyrosyl-[protein] + ATP = O-phospho-L-tyrosyl-[protein] + ADP + H(+). Probably involved in polymerization and/or export of exopolysaccharide EPS I which functions as a virulence factor. May be involved in an ATP-dependent process in the pathway for EPS I production, possibly export of the trimeric repeat units across the inner membrane or their polymerization. The polypeptide is Putative tyrosine-protein kinase EpsB (epsB) (Ralstonia solanacearum (Pseudomonas solanacearum)).